A 199-amino-acid polypeptide reads, in one-letter code: IMP cyclohydrolase (199 aa).

Belongs to the archaeal IMP cyclohydrolase family.

It catalyses the reaction IMP + H2O = 5-formamido-1-(5-phospho-D-ribosyl)imidazole-4-carboxamide. The protein operates within purine metabolism; IMP biosynthesis via de novo pathway; IMP from 5-formamido-1-(5-phospho-D-ribosyl)imidazole-4-carboxamide: step 1/1. Catalyzes the cyclization of 5-formylamidoimidazole-4-carboxamide ribonucleotide to IMP. This is IMP cyclohydrolase from Methanothrix thermoacetophila (strain DSM 6194 / JCM 14653 / NBRC 101360 / PT) (Methanosaeta thermophila).